A 115-amino-acid polypeptide reads, in one-letter code: Large ribosomal subunit protein uL24 (115 aa).

The protein belongs to the universal ribosomal protein uL24 family. In terms of assembly, part of the 50S ribosomal subunit.

In terms of biological role, one of two assembly initiator proteins, it binds directly to the 5'-end of the 23S rRNA, where it nucleates assembly of the 50S subunit. One of the proteins that surrounds the polypeptide exit tunnel on the outside of the subunit. The polypeptide is Large ribosomal subunit protein uL24 (Acaryochloris marina (strain MBIC 11017)).